Reading from the N-terminus, the 343-residue chain is Phosphate acyltransferase (343 aa).

Belongs to the PlsX family. In terms of assembly, homodimer. Probably interacts with PlsY.

It localises to the cytoplasm. It carries out the reaction a fatty acyl-[ACP] + phosphate = an acyl phosphate + holo-[ACP]. It participates in lipid metabolism; phospholipid metabolism. In terms of biological role, catalyzes the reversible formation of acyl-phosphate (acyl-PO(4)) from acyl-[acyl-carrier-protein] (acyl-ACP). This enzyme utilizes acyl-ACP as fatty acyl donor, but not acyl-CoA. The protein is Phosphate acyltransferase of Coxiella burnetii (strain Dugway 5J108-111).